A 369-amino-acid polypeptide reads, in one-letter code: Glutamate 5-kinase (369 aa).

Lysine 14 serves as a coordination point for ATP. Residues serine 56, aspartate 143, and asparagine 155 each coordinate substrate. ATP-binding positions include 175–176 (SD) and 215–221 (TGGMASK). Residues 277–351 (AGKIRLDDGA…GMQTQDLPDG (75 aa)) form the PUA domain.

This sequence belongs to the glutamate 5-kinase family.

The protein resides in the cytoplasm. It carries out the reaction L-glutamate + ATP = L-glutamyl 5-phosphate + ADP. Its pathway is amino-acid biosynthesis; L-proline biosynthesis; L-glutamate 5-semialdehyde from L-glutamate: step 1/2. In terms of biological role, catalyzes the transfer of a phosphate group to glutamate to form L-glutamate 5-phosphate. The polypeptide is Glutamate 5-kinase (Corynebacterium glutamicum (strain ATCC 13032 / DSM 20300 / JCM 1318 / BCRC 11384 / CCUG 27702 / LMG 3730 / NBRC 12168 / NCIMB 10025 / NRRL B-2784 / 534)).